The sequence spans 297 residues: 4-diphosphocytidyl-2-C-methyl-D-erythritol kinase (297 aa).

K22 is an active-site residue. ATP is bound at residue 111-121; sequence PSQAGMGGGSS. D153 is an active-site residue.

The protein belongs to the GHMP kinase family. IspE subfamily.

The enzyme catalyses 4-CDP-2-C-methyl-D-erythritol + ATP = 4-CDP-2-C-methyl-D-erythritol 2-phosphate + ADP + H(+). The protein operates within isoprenoid biosynthesis; isopentenyl diphosphate biosynthesis via DXP pathway; isopentenyl diphosphate from 1-deoxy-D-xylulose 5-phosphate: step 3/6. Functionally, catalyzes the phosphorylation of the position 2 hydroxy group of 4-diphosphocytidyl-2C-methyl-D-erythritol. The protein is 4-diphosphocytidyl-2-C-methyl-D-erythritol kinase of Polaromonas naphthalenivorans (strain CJ2).